A 223-amino-acid polypeptide reads, in one-letter code: Deoxyribose-phosphate aldolase (223 aa).

Asp89 functions as the Proton donor/acceptor in the catalytic mechanism. Lys152 acts as the Schiff-base intermediate with acetaldehyde in catalysis. Lys181 serves as the catalytic Proton donor/acceptor.

It belongs to the DeoC/FbaB aldolase family. DeoC type 1 subfamily.

The protein localises to the cytoplasm. It catalyses the reaction 2-deoxy-D-ribose 5-phosphate = D-glyceraldehyde 3-phosphate + acetaldehyde. Its pathway is carbohydrate degradation; 2-deoxy-D-ribose 1-phosphate degradation; D-glyceraldehyde 3-phosphate and acetaldehyde from 2-deoxy-alpha-D-ribose 1-phosphate: step 2/2. Its function is as follows. Catalyzes a reversible aldol reaction between acetaldehyde and D-glyceraldehyde 3-phosphate to generate 2-deoxy-D-ribose 5-phosphate. The polypeptide is Deoxyribose-phosphate aldolase (Bacillus cereus (strain ATCC 10987 / NRS 248)).